The primary structure comprises 458 residues: A-type ATP synthase subunit B (458 aa).

Belongs to the ATPase alpha/beta chains family. Has multiple subunits with at least A(3), B(3), C, D, E, F, H, I and proteolipid K(x).

Its subcellular location is the cell membrane. Its function is as follows. Component of the A-type ATP synthase that produces ATP from ADP in the presence of a proton gradient across the membrane. The B chain is a regulatory subunit. The protein is A-type ATP synthase subunit B of Methanocella arvoryzae (strain DSM 22066 / NBRC 105507 / MRE50).